The sequence spans 105 residues: uncharacterized protein (105 aa).

It belongs to the EspC family.

May be involved in assembly of the ESX-1 / type VII specialized secretion system (T7SS), which exports several proteins including EsxA and EsxB. Involved in DNA conjugation, in at least recipient strain. This is an uncharacterized protein from Mycolicibacterium smegmatis (strain MKD8) (Mycobacterium smegmatis).